The chain runs to 406 residues: Ribose-phosphate pyrophosphokinase 3, mitochondrial (406 aa).

Residues Met-1–Leu-32 are disordered. A mitochondrion-targeting transit peptide spans Met-1–Glu-87. Low complexity predominate over residues Ile-18–Leu-32. Asp-226 and His-228 together coordinate Mg(2+). A binding of phosphoribosylpyrophosphate region spans residues Gly-309–Thr-324.

Belongs to the ribose-phosphate pyrophosphokinase family.

Its subcellular location is the mitochondrion. It carries out the reaction D-ribose 5-phosphate + ATP = 5-phospho-alpha-D-ribose 1-diphosphate + AMP + H(+). The polypeptide is Ribose-phosphate pyrophosphokinase 3, mitochondrial (PRS3) (Spinacia oleracea (Spinach)).